Consider the following 525-residue polypeptide: Ent-kaurene oxidase (525 aa).

Residues 31-51 (VHWLIYVAFGAWLCSYVIHVL) form a helical membrane-spanning segment. Cys-466 serves as a coordination point for heme.

This sequence belongs to the cytochrome P450 family. Heme is required as a cofactor.

It is found in the membrane. It catalyses the reaction ent-kaur-16-ene + 3 reduced [NADPH--hemoprotein reductase] + 3 O2 = ent-kaur-16-en-19-oate + 3 oxidized [NADPH--hemoprotein reductase] + 4 H2O + 4 H(+). It functions in the pathway plant hormone biosynthesis; gibberellin biosynthesis. Functionally, catalyzes three successive oxidations of the 4-methyl group of ent-kaurene giving kaurenoic acid, a key step in gibberellin (GA) biosynthesis. The sequence is that of Ent-kaurene oxidase (CYP503A1) from Fusarium fujikuroi (Bakanae and foot rot disease fungus).